The sequence spans 194 residues: NADH-ubiquinone oxidoreductase subunit NUO2 (194 aa).

In terms of biological role, fungal-specific subunit of the mitochondrial membrane respiratory chain NADH dehydrogenase (Complex I). Complex I functions in the transfer of electrons from NADH to the respiratory chain. The immediate electron acceptor for the enzyme is believed to be ubiquinone. Plays a role in cell wall integrity and is involved in osmotic and oxidative resistance, yeast to hypha transition, and virulence via providing the ability to damage and invade host cells such as oral epithelial cells. This is NADH-ubiquinone oxidoreductase subunit NUO2 from Candida albicans (strain SC5314 / ATCC MYA-2876) (Yeast).